Reading from the N-terminus, the 189-residue chain is Glycerol-3-phosphate acyltransferase (189 aa).

5 helical membrane-spanning segments follow: residues 1–21, 50–70, 77–97, 111–131, and 151–171; these read MFWL…AIVL, KLAI…VLLA, LHAQ…PLYF, MLMG…LLTF, and LLAW…AMIV.

The protein belongs to the PlsY family. In terms of assembly, probably interacts with PlsX.

It localises to the cell inner membrane. The enzyme catalyses an acyl phosphate + sn-glycerol 3-phosphate = a 1-acyl-sn-glycero-3-phosphate + phosphate. It participates in lipid metabolism; phospholipid metabolism. Catalyzes the transfer of an acyl group from acyl-phosphate (acyl-PO(4)) to glycerol-3-phosphate (G3P) to form lysophosphatidic acid (LPA). This enzyme utilizes acyl-phosphate as fatty acyl donor, but not acyl-CoA or acyl-ACP. The sequence is that of Glycerol-3-phosphate acyltransferase from Pseudomonas putida (strain GB-1).